We begin with the raw amino-acid sequence, 338 residues long: Clathrin light chain 1 (338 aa).

The segment at 1-111 (MATFDDGDFP…NEMREEGFQR (111 aa)) is disordered. Composition is skewed to polar residues over residues 29 to 47 (SEAQ…SSFN) and 61 to 73 (SSPN…PFES). Positions 102–111 (NEMREEGFQR) are enriched in basic and acidic residues. The segment at 102–163 (NEMREEGFQR…TIETNKTDNR (62 aa)) is involved in binding clathrin heavy chain. Residues 122–142 (LEEKEKKEKEMRNQIITEAED) adopt a coiled-coil conformation. A disordered region spans residues 192–338 (IPREVPNIEK…VTEAEGTKAE (147 aa)). Positions 197–212 (PNIEKKRGKKDPDKKP) are enriched in basic and acidic residues. The span at 241-253 (NPPPHMMPPPPPA) shows a compositional bias: pro residues. Over residues 254 to 304 (KDAKDGKDAKDGKDAKTGKDGKDAKGGKDAKDLKDGKPADPKVTEEKRPSP) the composition is skewed to basic and acidic residues.

It belongs to the clathrin light chain family. As to quaternary structure, clathrin coats are formed from molecules containing 3 heavy chains and 3 light chains.

It localises to the cytoplasmic vesicle membrane. The protein localises to the membrane. It is found in the coated pit. Functionally, clathrin is the major protein of the polyhedral coat of coated pits and vesicles. In Arabidopsis thaliana (Mouse-ear cress), this protein is Clathrin light chain 1.